The following is a 447-amino-acid chain: Signal recognition particle 54 kDa protein (447 aa).

GTP-binding positions include 103–110 (GVQGSGKT), 185–189 (DTAGR), and 245–248 (TKMD).

This sequence belongs to the GTP-binding SRP family. SRP54 subfamily. Part of the signal recognition particle protein translocation system, which is composed of SRP and FtsY. Archaeal SRP consists of a 7S RNA molecule of 300 nucleotides and two protein subunits: SRP54 and SRP19.

The protein resides in the cytoplasm. It catalyses the reaction GTP + H2O = GDP + phosphate + H(+). Functionally, involved in targeting and insertion of nascent membrane proteins into the cytoplasmic membrane. Binds to the hydrophobic signal sequence of the ribosome-nascent chain (RNC) as it emerges from the ribosomes. The SRP-RNC complex is then targeted to the cytoplasmic membrane where it interacts with the SRP receptor FtsY. This Saccharolobus islandicus (strain L.S.2.15 / Lassen #1) (Sulfolobus islandicus) protein is Signal recognition particle 54 kDa protein.